Consider the following 884-residue polypeptide: Translation initiation factor IF-2 (884 aa).

The disordered stretch occupies residues 58–248 (PEKVEQKRVR…GKTESVETEE (191 aa)). Residues 66–77 (VRSNVIRKRRQP) show a composition bias toward basic residues. The segment covering 87-106 (EAPAAQAPEAEEVTAPTAEE) has biased composition (low complexity). A compositionally biased stretch (basic residues) spans 172–183 (SRKKAKAKKHQA). The segment covering 207 to 223 (DTAPADSPAAPAAATPA) has biased composition (low complexity). Basic residues predominate over residues 229–239 (KPSRKDRKKRG). Residues 384–553 (KRAPVVTIMG…LLQAEMLELK (170 aa)) form the tr-type G domain. A G1 region spans residues 393-400 (GHVDHGKT). Residue 393–400 (GHVDHGKT) coordinates GTP. A G2 region spans residues 418–422 (GITQH). A G3 region spans residues 439 to 442 (DTPG). GTP-binding positions include 439–443 (DTPGH) and 493–496 (NKID). The interval 493 to 496 (NKID) is G4. The tract at residues 529–531 (SAK) is G5.

It belongs to the TRAFAC class translation factor GTPase superfamily. Classic translation factor GTPase family. IF-2 subfamily.

It localises to the cytoplasm. In terms of biological role, one of the essential components for the initiation of protein synthesis. Protects formylmethionyl-tRNA from spontaneous hydrolysis and promotes its binding to the 30S ribosomal subunits. Also involved in the hydrolysis of GTP during the formation of the 70S ribosomal complex. The chain is Translation initiation factor IF-2 from Desulfosudis oleivorans (strain DSM 6200 / JCM 39069 / Hxd3) (Desulfococcus oleovorans).